A 584-amino-acid polypeptide reads, in one-letter code: Cationic amino acid transporter 7, chloroplastic (584 aa).

The N-terminal 49 residues, Met-1 to Arg-49, are a transit peptide targeting the chloroplast. Helical transmembrane passes span Trp-62–Thr-82, Ala-90–Phe-110, Ile-131–Leu-151, Gly-185–Cys-205, Val-214–Phe-234, Phe-254–Ile-274, Ile-293–Ile-313, Val-346–Gln-366, Ala-396–Leu-416, Leu-417–Phe-437, Trp-449–Trp-469, Phe-480–Val-500, Phe-508–Leu-528, and Phe-540–Tyr-560.

The protein belongs to the amino acid-polyamine-organocation (APC) superfamily. Cationic amino acid transporter (CAT) (TC 2.A.3.3) family.

Its subcellular location is the plastid. The protein localises to the chloroplast membrane. Permease involved in the transport of the cationic amino acids. This chain is Cationic amino acid transporter 7, chloroplastic (CAT7), found in Arabidopsis thaliana (Mouse-ear cress).